Reading from the N-terminus, the 86-residue chain is Small ribosomal subunit protein bS20 (86 aa).

Residues 1-27 (MANIKSAKKRAVQSEKRRQHNASRRSM) show a composition bias toward basic residues. Residues 1 to 28 (MANIKSAKKRAVQSEKRRQHNASRRSMM) are disordered.

Belongs to the bacterial ribosomal protein bS20 family.

Binds directly to 16S ribosomal RNA. The chain is Small ribosomal subunit protein bS20 from Proteus mirabilis (strain HI4320).